The following is a 207-amino-acid chain: MAKTYDYLFKLLLIGDSGVGKTCVLFRFSEDAFNSTFISTIGIDFKIRTIELDGKRIKLQIWDTAGQERFRTITTAYYRGAMGIMLVYDITNEKSFDNIRNWIRNIEEHASADVEKMILGNKCDVNDKRQVSKERGEKLALDYGIKFMETSAKANINVENAFFTLARDIKAKMDKKLEGNSPQGSSHGVKITVEQQKRTSFFRCSLL.

Positions 17, 18, 19, 20, 21, 22, 23, 35, 39, and 40 each coordinate GTP. Mg(2+) is bound at residue T22. 2 short sequence motifs (switch) span residues D31–F45 and D63–G80. Mg(2+)-binding residues include T40 and D63. Position 66 (G66) interacts with GTP. Residue T72 is modified to Phosphothreonine; by LRRK2. Positions 121, 122, 124, 152, and 153 each coordinate GTP. 2 positions are modified to phosphoserine: S181 and S185. C204 carries the post-translational modification Cysteine methyl ester. The S-geranylgeranyl cysteine moiety is linked to residue C204. Positions S205–L207 are cleaved as a propeptide — removed in mature form.

The protein belongs to the small GTPase superfamily. Rab family. Interacts (GTP-bound form) with MICALL1; regulates RAB8A association with recycling endosomes. Interacts with MICALL2; competes with RAB13 and is involved in E-cadherin endocytic recycling. Interacts (GTP-bound form) with MICAL1, MICALCL, MICAL3 and EHBP1L1; two molecules of RAB8A can bind to one molecule of the effector protein; ternary complexes of RAB8A, RAB13 and either MICAL1 or EHBP1L1 are possible. Interacts (GTP-bound form) with EHBP1. Interacts with EHD1. Interacts with MAP4K2 and SYTL4. Interacts with SGSM1 and SGSM3. Interacts with RABIF, RIMS2, RPH3A and RPH3A. Interacts with OPTN. Interacts with MYO5B. Interacts with CIMAP3. Interacts with BIRC6/bruce. Interacts with OCRL. Interacts with AHI1. Interacts with DCDC1. Interacts with LRRK2; interaction facilitates phosphorylation of Thr-72. Interacts with RAB31P, GDI1, GDI2, CHM, CHML, RABGGTA, RABGGTB, TBC1D15 and INPP5B; these interactions are dependent on Thr-72 not being phosphorylated. Interacts with RILPL1 and RILPL2; these interactions are dependent on the phosphorylation of Thr-72 by LRRK2. Interacts with DZIP1; prevents inhibition by the GDP-dissociation inhibitor GDI2. Interacts with RAB3IP/Rabin8, RAB3IP functions as guanine exchange factor (GEF) towards RAB8A. Interacts (in GDP-bound form) with RPGR, RPGR functions as GEF towards RAB8A. Mg(2+) is required as a cofactor. In terms of processing, phosphorylation of Thr-72 in the switch II region by LRRK2 prevents the association of RAB regulatory proteins, including CHM, CHML and RAB GDP dissociation inhibitors GDI1 and GDI2. Phosphorylation by LRRK2 is required for localization to stressed lysosomes.

It is found in the cell membrane. Its subcellular location is the golgi apparatus. It localises to the endosome membrane. The protein localises to the recycling endosome membrane. The protein resides in the cell projection. It is found in the cilium. Its subcellular location is the cytoplasmic vesicle. It localises to the phagosome membrane. The protein localises to the cytoplasm. The protein resides in the cytoskeleton. It is found in the microtubule organizing center. Its subcellular location is the centrosome. It localises to the centriole. The protein localises to the cilium basal body. The protein resides in the midbody. It is found in the lysosome. It carries out the reaction GTP + H2O = GDP + phosphate + H(+). Its activity is regulated as follows. Regulated by guanine nucleotide exchange factors (GEFs) such as RAB3IP/Rabin8 and RPGR which promote the exchange of bound GDP for free GTP, GTPase activating proteins (GAPs) which increase the GTP hydrolysis activity, and GDP dissociation inhibitors (GDIs) which inhibit the dissociation of the nucleotide from the GTPase. Activated in response to insulin. The small GTPases Rab are key regulators of intracellular membrane trafficking, from the formation of transport vesicles to their fusion with membranes. Rabs cycle between an inactive GDP-bound form and an active GTP-bound form that is able to recruit to membranes different sets of downstream effectors directly responsible for vesicle formation, movement, tethering and fusion. RAB8A is involved in polarized vesicular trafficking and neurotransmitter release. Together with RAB11A, RAB3IP, the exocyst complex, PARD3, PRKCI, ANXA2, CDC42 and DNMBP promotes transcytosis of PODXL to the apical membrane initiation sites (AMIS), apical surface formation and lumenogenesis. Regulates the compacted morphology of the Golgi. Together with MYO5B and RAB11A participates in epithelial cell polarization. Also involved in membrane trafficking to the cilium and ciliogenesis. Together with MICALL2, may also regulate adherens junction assembly. May play a role in insulin-induced transport to the plasma membrane of the glucose transporter GLUT4 and therefore play a role in glucose homeostasis. Involved in autophagy. Participates in the export of a subset of neosynthesized proteins through a Rab8-Rab10-Rab11-dependent endososomal export route. Targeted to and stabilized on stressed lysosomes through LRRK2 phosphorylation. Suppresses stress-induced lysosomal enlargement through EHBP1 and EHNP1L1 effector proteins. The polypeptide is Ras-related protein Rab-8A (Mus musculus (Mouse)).